The chain runs to 92 residues: Signal recognition particle 19 kDa protein (92 aa).

The protein belongs to the SRP19 family. In terms of assembly, part of the signal recognition particle protein translocation system, which is composed of SRP and FtsY. Archaeal SRP consists of a 7S RNA molecule of 300 nucleotides and two protein subunits: SRP54 and SRP19.

The protein resides in the cytoplasm. In terms of biological role, involved in targeting and insertion of nascent membrane proteins into the cytoplasmic membrane. Binds directly to 7S RNA and mediates binding of the 54 kDa subunit of the SRP. The sequence is that of Signal recognition particle 19 kDa protein from Haloarcula marismortui (strain ATCC 43049 / DSM 3752 / JCM 8966 / VKM B-1809) (Halobacterium marismortui).